Consider the following 274-residue polypeptide: Diaminopimelate epimerase (274 aa).

Residues N11, Q44, and N64 each coordinate substrate. C73 (proton donor) is an active-site residue. Residues 74–75 (GN), N157, N190, and 208–209 (ER) each bind substrate. The active-site Proton acceptor is C217. Residue 218–219 (GS) participates in substrate binding.

It belongs to the diaminopimelate epimerase family. Homodimer.

It is found in the cytoplasm. The enzyme catalyses (2S,6S)-2,6-diaminopimelate = meso-2,6-diaminopimelate. Its pathway is amino-acid biosynthesis; L-lysine biosynthesis via DAP pathway; DL-2,6-diaminopimelate from LL-2,6-diaminopimelate: step 1/1. Functionally, catalyzes the stereoinversion of LL-2,6-diaminopimelate (L,L-DAP) to meso-diaminopimelate (meso-DAP), a precursor of L-lysine and an essential component of the bacterial peptidoglycan. The sequence is that of Diaminopimelate epimerase from Pectobacterium atrosepticum (strain SCRI 1043 / ATCC BAA-672) (Erwinia carotovora subsp. atroseptica).